Reading from the N-terminus, the 177-residue chain is Thymidine kinase (177 aa).

11 to 18 (GPMFSGKS) lines the ATP pocket. Catalysis depends on glutamate 83, which acts as the Proton acceptor. A substrate-binding site is contributed by phenylalanine 113. Zn(2+) is bound by residues cysteine 138 and cysteine 141. Position 157 to 161 (157 to 161 (IEIIG)) interacts with substrate. Cysteine 170 and cysteine 173 together coordinate Zn(2+).

Belongs to the thymidine kinase family. As to quaternary structure, homotetramer. Two molecules of substrate bind to each enzyme tetramer.

It carries out the reaction thymidine + ATP = dTMP + ADP + H(+). Phosphorylates thymidine and thymidine analogs, such as azidothymidine (AZT). Part of the salvage pathway for pyrimidine deoxyribonucleotide synthesis. In Homo sapiens (Human), this protein is Thymidine kinase (OPG101).